We begin with the raw amino-acid sequence, 186 residues long: Crossover junction endodeoxyribonuclease RuvC (186 aa).

Catalysis depends on residues Asp7, Glu73, and Asp145. Mg(2+) contacts are provided by Asp7, Glu73, and Asp145.

The protein belongs to the RuvC family. Homodimer which binds Holliday junction (HJ) DNA. The HJ becomes 2-fold symmetrical on binding to RuvC with unstacked arms; it has a different conformation from HJ DNA in complex with RuvA. In the full resolvosome a probable DNA-RuvA(4)-RuvB(12)-RuvC(2) complex forms which resolves the HJ. Mg(2+) is required as a cofactor.

Its subcellular location is the cytoplasm. It catalyses the reaction Endonucleolytic cleavage at a junction such as a reciprocal single-stranded crossover between two homologous DNA duplexes (Holliday junction).. In terms of biological role, the RuvA-RuvB-RuvC complex processes Holliday junction (HJ) DNA during genetic recombination and DNA repair. Endonuclease that resolves HJ intermediates. Cleaves cruciform DNA by making single-stranded nicks across the HJ at symmetrical positions within the homologous arms, yielding a 5'-phosphate and a 3'-hydroxyl group; requires a central core of homology in the junction. The consensus cleavage sequence is 5'-(A/T)TT(C/G)-3'. Cleavage occurs on the 3'-side of the TT dinucleotide at the point of strand exchange. HJ branch migration catalyzed by RuvA-RuvB allows RuvC to scan DNA until it finds its consensus sequence, where it cleaves and resolves the cruciform DNA. The polypeptide is Crossover junction endodeoxyribonuclease RuvC (Acidovorax sp. (strain JS42)).